The primary structure comprises 88 residues: Acyl-CoA-binding domain-containing protein 7 (88 aa).

The region spanning 3–88 is the ACB domain; the sequence is LQADFDQAAQ…ARELIEKYGI (86 aa). An acyl-CoA is bound by residues arginine 15, 30–34, lysine 56, and tyrosine 75; that span reads YGLYK.

The protein belongs to the ACBD7 family.

Functionally, binds medium- and long-chain acyl-CoA esters. The protein is Acyl-CoA-binding domain-containing protein 7 (Acbd7) of Mus musculus (Mouse).